Here is a 336-residue protein sequence, read N- to C-terminus: Phosphate acyltransferase (336 aa).

This sequence belongs to the PlsX family. Homodimer. Probably interacts with PlsY.

The protein resides in the cytoplasm. The catalysed reaction is a fatty acyl-[ACP] + phosphate = an acyl phosphate + holo-[ACP]. Its pathway is lipid metabolism; phospholipid metabolism. In terms of biological role, catalyzes the reversible formation of acyl-phosphate (acyl-PO(4)) from acyl-[acyl-carrier-protein] (acyl-ACP). This enzyme utilizes acyl-ACP as fatty acyl donor, but not acyl-CoA. In Dictyoglomus turgidum (strain DSM 6724 / Z-1310), this protein is Phosphate acyltransferase.